Reading from the N-terminus, the 550-residue chain is Chaperonin GroEL (550 aa).

Residues 30–33 (TLGP), K51, 87–91 (DGTTT), G415, 478–480 (NAA), and D494 each bind ATP.

It belongs to the chaperonin (HSP60) family. As to quaternary structure, forms a cylinder of 14 subunits composed of two heptameric rings stacked back-to-back. Interacts with the co-chaperonin GroES.

Its subcellular location is the cytoplasm. The catalysed reaction is ATP + H2O + a folded polypeptide = ADP + phosphate + an unfolded polypeptide.. Its function is as follows. Together with its co-chaperonin GroES, plays an essential role in assisting protein folding. The GroEL-GroES system forms a nano-cage that allows encapsulation of the non-native substrate proteins and provides a physical environment optimized to promote and accelerate protein folding. The sequence is that of Chaperonin GroEL from Desulfosudis oleivorans (strain DSM 6200 / JCM 39069 / Hxd3) (Desulfococcus oleovorans).